The following is a 141-amino-acid chain: Large-conductance mechanosensitive channel (141 aa).

The next 3 helical transmembrane spans lie at Met17–Val37, Leu40–Ala60, and Gly86–Val106.

The protein belongs to the MscL family. Homopentamer.

It localises to the cell inner membrane. Its function is as follows. Channel that opens in response to stretch forces in the membrane lipid bilayer. May participate in the regulation of osmotic pressure changes within the cell. The protein is Large-conductance mechanosensitive channel of Thiobacillus denitrificans (strain ATCC 25259 / T1).